The following is a 98-amino-acid chain: Small ribosomal subunit protein eS24 (98 aa).

It belongs to the eukaryotic ribosomal protein eS24 family.

This is Small ribosomal subunit protein eS24 from Thermococcus onnurineus (strain NA1).